A 73-amino-acid polypeptide reads, in one-letter code: Kappa-scoloptoxin(03)-Ssm1c (73 aa).

The signal sequence occupies residues 1-23; sequence MKSWMAILLVMALIIFTLDNCYS. 3 cysteine pairs are disulfide-bonded: C32/C58, C41/C57, and C44/C67.

It belongs to the scoloptoxin family. In terms of tissue distribution, expressed by the venom gland.

It is found in the secreted. Inhibits voltage-gated potassium channels. The chain is Kappa-scoloptoxin(03)-Ssm1c from Scolopendra mutilans (Chinese red-headed centipede).